The primary structure comprises 141 residues: Nucleoside diphosphate kinase (141 aa).

Residues Lys-11, Phe-59, Arg-87, Thr-93, Arg-104, and Asn-114 each contribute to the ATP site. The active-site Pros-phosphohistidine intermediate is the His-117.

It belongs to the NDK family. In terms of assembly, homotetramer. The cofactor is Mg(2+).

It is found in the cytoplasm. The enzyme catalyses a 2'-deoxyribonucleoside 5'-diphosphate + ATP = a 2'-deoxyribonucleoside 5'-triphosphate + ADP. The catalysed reaction is a ribonucleoside 5'-diphosphate + ATP = a ribonucleoside 5'-triphosphate + ADP. Functionally, major role in the synthesis of nucleoside triphosphates other than ATP. The ATP gamma phosphate is transferred to the NDP beta phosphate via a ping-pong mechanism, using a phosphorylated active-site intermediate. The polypeptide is Nucleoside diphosphate kinase (Stenotrophomonas maltophilia (strain R551-3)).